A 523-amino-acid chain; its full sequence is Membrane protein PTM1 (523 aa).

The signal sequence occupies residues 1-26 (MRVYQFCRPFQLFTYFLCYLLVFVKA). The Lumenal portion of the chain corresponds to 27 to 197 (NKEKISQKNY…LAGTEINKLP (171 aa)). Residue Asn-132 is glycosylated (N-linked (GlcNAc...) asparagine). The helical transmembrane segment at 198 to 218 (LYGLLAVAYVVAMALYSFAFW) threads the bilayer. Over 219–230 (KHKHELLPLQKY) the chain is Cytoplasmic. Residues 231 to 251 (LLAFFVFLTAETIFVWAYYDL) form a helical membrane-spanning segment. Over 252–265 (KNEKGDTAGIKVYM) the chain is Lumenal. Residues 266–286 (VFLSILTAGKVTFSFFLLLII) form a helical membrane-spanning segment. Residues 287-304 (ALGYGIVYPKLNKTLMRR) lie on the Cytoplasmic side of the membrane. The helical transmembrane segment at 305–325 (CQMYGALTYAICIGFLIQSYL) threads the bilayer. The Lumenal portion of the chain corresponds to 326 to 333 (TDMEAPSP). The chain crosses the membrane as a helical span at residues 334 to 354 (LILITLIPMALALIIFYYMII). Residues 355–381 (RSMTKTVIYLKEQRQIVKLNMYKKLLY) lie on the Cytoplasmic side of the membrane. A helical membrane pass occupies residues 382–402 (IIYASFLSVLAGSIVSSFIYV). At 403 to 417 (GMNTIDMIEKNWRSR) the chain is on the lumenal side. Residues 418–438 (FFVTDFWPTLVYFIVFVTIAF) traverse the membrane as a helical segment. Topologically, residues 439-523 (LWRPTDTSYM…HGPVSPSPTK (85 aa)) are cytoplasmic. Ser-480 is subject to Phosphoserine. Thr-483 and Thr-498 each carry phosphothreonine. The interval 483–523 (TGERGIDEDDLNLNFTDDEEGHDNVNNHSQGHGPVSPSPTK) is disordered. The span at 488-503 (IDEDDLNLNFTDDEEG) shows a compositional bias: acidic residues.

It belongs to the LU7TM family.

It localises to the golgi apparatus membrane. Its subcellular location is the early endosome membrane. This is Membrane protein PTM1 (PTM1) from Saccharomyces cerevisiae (strain YJM789) (Baker's yeast).